A 228-amino-acid chain; its full sequence is Protein-L-isoaspartate O-methyltransferase (228 aa).

Residue Ser-74 is part of the active site.

The protein belongs to the methyltransferase superfamily. L-isoaspartyl/D-aspartyl protein methyltransferase family.

The protein resides in the cytoplasm. The catalysed reaction is [protein]-L-isoaspartate + S-adenosyl-L-methionine = [protein]-L-isoaspartate alpha-methyl ester + S-adenosyl-L-homocysteine. Functionally, catalyzes the methyl esterification of L-isoaspartyl residues in peptides and proteins that result from spontaneous decomposition of normal L-aspartyl and L-asparaginyl residues. It plays a role in the repair and/or degradation of damaged proteins. This chain is Protein-L-isoaspartate O-methyltransferase, found in Methylorubrum extorquens (strain PA1) (Methylobacterium extorquens).